A 403-amino-acid chain; its full sequence is Phosphopentomutase (403 aa).

Mn(2+) is bound by residues Asp-13, Asp-298, His-303, Asp-339, His-340, and His-351.

Belongs to the phosphopentomutase family. Mn(2+) is required as a cofactor.

The protein localises to the cytoplasm. The enzyme catalyses 2-deoxy-alpha-D-ribose 1-phosphate = 2-deoxy-D-ribose 5-phosphate. It catalyses the reaction alpha-D-ribose 1-phosphate = D-ribose 5-phosphate. Its pathway is carbohydrate degradation; 2-deoxy-D-ribose 1-phosphate degradation; D-glyceraldehyde 3-phosphate and acetaldehyde from 2-deoxy-alpha-D-ribose 1-phosphate: step 1/2. Isomerase that catalyzes the conversion of deoxy-ribose 1-phosphate (dRib-1-P) and ribose 1-phosphate (Rib-1-P) to deoxy-ribose 5-phosphate (dRib-5-P) and ribose 5-phosphate (Rib-5-P), respectively. The sequence is that of Phosphopentomutase from Streptococcus equi subsp. zooepidemicus (strain MGCS10565).